A 654-amino-acid polypeptide reads, in one-letter code: MTDRIVPATLVFREDGTVVSPLYGDIYHSAAGALAQADHVFIRGNDLPERWRHKRTFTIVETGFGTGCNFLATWAAWRADPSHCERLHFVSVEKHPFARDDLRRAAAHIVAYTTIEPLVDALANAWPALTPGVHRLEFDEGRVTLTLAFGDALDVLPNLALRADAFYLDGFAPSKNADLWSPAIFKSLAKLADEHATFATYTSSGAVKRALDEAGFAYRKVEGFAGKRAMLVGEFAPRWRVRRHEPPRALDVGTRDAIVIGAGLAGCAAVERLAARGWHVTLIERRERIASEASGNPAGVFHPMIARDDNLAARLSRAGFLHALNRWRALEHAGHTFARSAHGLVQLATSADEFELMRESVDTLGVPSELARTLSRDDAQALLRTDIAHGGWLFPQGGSISPAALAAAQCAAAGDRLSRIAGVEVARLERGGDGRWLALDASGATIAQASVVIVANAADAARVAGLRHAPTQRVRGQLTLLPPGSAPAVPLPAIGDGYVVPLANGVTLTGATYEPDDADTTLREAGHRENLERLERLLPAFSAHALDAHALAGRVGFRCVASDRLPLVGELGDEAAAARDAAALTGARLRDVPRAAGLYGAFGYGSRGLVWAALGAELIAAQIEGEPWPLERELAEAIDPARFLIRALRRGRVA.

Residues 1-236 (MTDRIVPATL…KRAMLVGEFA (236 aa)) are tRNA (mnm(5)s(2)U34)-methyltransferase. Residues 260 to 654 (IGAGLAGCAA…IRALRRGRVA (395 aa)) are FAD-dependent cmnm(5)s(2)U34 oxidoreductase.

It in the N-terminal section; belongs to the methyltransferase superfamily. tRNA (mnm(5)s(2)U34)-methyltransferase family. The protein in the C-terminal section; belongs to the DAO family. FAD serves as cofactor.

Its subcellular location is the cytoplasm. The catalysed reaction is 5-aminomethyl-2-thiouridine(34) in tRNA + S-adenosyl-L-methionine = 5-methylaminomethyl-2-thiouridine(34) in tRNA + S-adenosyl-L-homocysteine + H(+). Its function is as follows. Catalyzes the last two steps in the biosynthesis of 5-methylaminomethyl-2-thiouridine (mnm(5)s(2)U) at the wobble position (U34) in tRNA. Catalyzes the FAD-dependent demodification of cmnm(5)s(2)U34 to nm(5)s(2)U34, followed by the transfer of a methyl group from S-adenosyl-L-methionine to nm(5)s(2)U34, to form mnm(5)s(2)U34. The chain is tRNA 5-methylaminomethyl-2-thiouridine biosynthesis bifunctional protein MnmC from Burkholderia thailandensis (strain ATCC 700388 / DSM 13276 / CCUG 48851 / CIP 106301 / E264).